Here is a 624-residue protein sequence, read N- to C-terminus: MEIQFGNQRCRMVNSGGFLATDGSHLKEMETDDVLVEFLNIEHQLFIRNIRAIVKIADTTVLPSASDKKLLYYVFDETRVRINDTPVIFSKLEEDNANVNEGSKMGVMTVPNTPQKPNLQQQKFEAINANEDQIDYSSNLEQNYNSLIRQGSDQVIPLSRFASEKSALELEKELFSERIPESQSAAEPVLKVENSENDLDEKLVLDGQHVEGDHSSDTEEEVVSEDQKQLNKTDDESTFIESHQIYIQGETKSPSSVSQSLSGDPSLKPAEVFDRKQSAEINSPIEKDVNPQQNISDSSIKNNSIHSDEVNPEVRPDLTPSNENEESKRSAPEIALKEKESTSQDESNREAEEAPISTNYSFPSSSLEDQPDKNVQSSAVENKNKHTNLVTSSFNLTKPMKSFIRRNGLRVQESVTDETDFVILGSPPLRRTHKFLLATSLGIPLVSSQYLTDCIKSGKVLDFRSYKYKDEEAEAKWGFRLDDIHRRTCFNGKRLYITKAIRDSMVGDSIHGLYSILETSGAEIVGDIKRAQEKDTIILAQPDNDQEGRNMSATGLNVYKIELVALSILRDRIDFDEFLIDYDADSPTKVIGKRNVSKASRTGQGRKRSSRSSWNKPSAKEQRT.

Disordered regions lie at residues 177-237 (ERIP…DDES), 249-386 (GETK…KNKH), and 591-624 (IGKR…EQRT). 2 stretches are compositionally biased toward basic and acidic residues: residues 200–217 (DEKL…HSSD) and 225–235 (EDQKQLNKTDD). Over residues 250–263 (ETKSPSSVSQSLSG) the composition is skewed to polar residues. Ser-253 and Ser-283 each carry phosphoserine. The span at 294–305 (NISDSSIKNNSI) shows a compositional bias: low complexity. Basic and acidic residues-rich tracts occupy residues 306–316 (HSDEVNPEVRP) and 325–352 (EESK…REAE). Residues 356-386 (ISTNYSFPSSSLEDQPDKNVQSSAVENKNKH) are compositionally biased toward polar residues. One can recognise a BRCT domain in the interval 376–468 (QSSAVENKNK…KVLDFRSYKY (93 aa)).

As to quaternary structure, homodimer. Interacts (via BRCT domain) with hta1 peptide containing the S/T-Q motif in vitro; this interaction requires phosphorylation of the hta1 peptide at the S/T-Q motif.

Its subcellular location is the nucleus. The protein localises to the chromosome. The protein resides in the cytoplasm. It localises to the cytoskeleton. It is found in the spindle. Its function is as follows. Involved in DNA damage response (DDR) mediated through its interaction with phosphorylated H2A proteins hta1 and hta2 which mark the discrete foci of DNA damage. This Schizosaccharomyces pombe (strain 972 / ATCC 24843) (Fission yeast) protein is DNA damage response protein Mdb1.